We begin with the raw amino-acid sequence, 157 residues long: Putative 6-carboxy-5,6,7,8-tetrahydropterin synthase (157 aa).

His21 is a binding site for Zn(2+). Catalysis depends on Cys31, which acts as the Proton acceptor. Residues His35 and His37 each contribute to the Zn(2+) site. Catalysis depends on charge relay system residues His70 and Glu140.

Belongs to the PTPS family. QueD subfamily. Requires Zn(2+) as cofactor.

It carries out the reaction 7,8-dihydroneopterin 3'-triphosphate + H2O = 6-carboxy-5,6,7,8-tetrahydropterin + triphosphate + acetaldehyde + 2 H(+). Its pathway is purine metabolism; 7-cyano-7-deazaguanine biosynthesis. Functionally, catalyzes the conversion of 7,8-dihydroneopterin triphosphate (H2NTP) to 6-carboxy-5,6,7,8-tetrahydropterin (CPH4) and acetaldehyde. This chain is Putative 6-carboxy-5,6,7,8-tetrahydropterin synthase (queD), found in Pyrococcus horikoshii (strain ATCC 700860 / DSM 12428 / JCM 9974 / NBRC 100139 / OT-3).